The primary structure comprises 369 residues: MKSGRFIGVMSGTSLDGVDVVLATIDEHRVAQLASLSWPIPVSLKQAVLDICQGQQLTLSQFGQLDTQLGRLFADAVKALLKEQNLQARDIVAIGCHGQTVWHEPTGVAPHTLQIGDNNQIVARTGITVVGDFRRRDIALGGQGAPLVPAFHHALLAHPTERRMVLNIGGIANLSLLIPGQPVGGYDTGPGNMLMDAWIWRQAGKPYDKDAEWARAGKVILPLLQNMLSDPYFSQPAPKSTGREYFNYGWLERHLRHFPGVDPRDVQATLAELTAVTISEQVLLSGGCERLMVCGGGSRNPLLMARLAALLPGTEVTTTDAVGISGDDMEALAFAWLAWRTLAGLPGNLPSVTGASQETVLGAIFPANS.

An ATP-binding site is contributed by 12-19 (GTSLDGVD).

Belongs to the anhydro-N-acetylmuramic acid kinase family.

It catalyses the reaction 1,6-anhydro-N-acetyl-beta-muramate + ATP + H2O = N-acetyl-D-muramate 6-phosphate + ADP + H(+). It participates in amino-sugar metabolism; 1,6-anhydro-N-acetylmuramate degradation. The protein operates within cell wall biogenesis; peptidoglycan recycling. Its function is as follows. Catalyzes the specific phosphorylation of 1,6-anhydro-N-acetylmuramic acid (anhMurNAc) with the simultaneous cleavage of the 1,6-anhydro ring, generating MurNAc-6-P. Is required for the utilization of anhMurNAc either imported from the medium or derived from its own cell wall murein, and thus plays a role in cell wall recycling. This Escherichia coli O157:H7 protein is Anhydro-N-acetylmuramic acid kinase.